The sequence spans 306 residues: MSNEFITFEKISRESWKTLHQKAKALLTQEELKSITSLNDNISINDVIDIYLPLINLIQVYKIAQENLSFSKSLFLKKDIQLRPFIIGISGSVAVGKSTTSRLLQLLLSRTHPNSQVELVTTDGFLYPNQFLIEQGLLNRKGFPESYNMELLLDFLDSIKNGQTAFAPVYSHDIYDIIPNKKQSFNNPDFLIVEGINVFQNQQNNRLYMSDYFDFSIYIDADSSHIETWYIERFLSILKLAKRDPHNYYAQYAQLPRSEAIAFARNVWKTVNLENLEKFIEPTRNRAELILHKSADHKIDEIYLKK.

Position 91 to 98 (91 to 98 (GSVAVGKS)) interacts with ATP.

The protein belongs to the prokaryotic pantothenate kinase family.

Its subcellular location is the cytoplasm. The catalysed reaction is (R)-pantothenate + ATP = (R)-4'-phosphopantothenate + ADP + H(+). It participates in cofactor biosynthesis; coenzyme A biosynthesis; CoA from (R)-pantothenate: step 1/5. This Streptococcus pyogenes serotype M49 (strain NZ131) protein is Pantothenate kinase.